A 944-amino-acid chain; its full sequence is Proline and serine-rich protein 1 (944 aa).

M1 is modified (N-acetylmethionine). Disordered regions lie at residues 233-285 (PPPY…PVPT), 369-396 (PGPS…SEAF), 608-633 (KTEP…HGTL), and 912-944 (ESYP…SGWQ). The segment covering 248–274 (LSNPSKPIQNQTFSTPASQLFSPHGSN) has biased composition (polar residues). Residues 275–285 (PSTPAATPVPT) show a composition bias toward low complexity. Polar residues predominate over residues 932–944 (FSLQPSLSQSGWQ).

In terms of assembly, interacts with TET2 and OGT; this interaction mediates TET2 O-GlcNAcylation and stability by promoting the interaction between OGT and TET2. Interacts with KDM6A. Interacts with TET1. Glycosylated. Interaction with OGT leads to GlcNAcylation.

Functionally, mediates OGT interaction with and O-GlcNAcylation of TET2 to control TET2 stabilization at enhancers and CpG islands (CGIs). This Homo sapiens (Human) protein is Proline and serine-rich protein 1.